A 206-amino-acid polypeptide reads, in one-letter code: Hypoxanthine-guanine phosphoribosyltransferase (206 aa).

Residues 110-118 (DEVDDTRTT), Lys154, and 181-187 (WIMYPWE) contribute to the GMP site. The active-site Proton acceptor is Asp114.

It belongs to the purine/pyrimidine phosphoribosyltransferase family. In terms of assembly, dimer. Requires Mg(2+) as cofactor.

It localises to the endoplasmic reticulum. The enzyme catalyses IMP + diphosphate = hypoxanthine + 5-phospho-alpha-D-ribose 1-diphosphate. It catalyses the reaction GMP + diphosphate = guanine + 5-phospho-alpha-D-ribose 1-diphosphate. In terms of biological role, converts guanine to guanosine monophosphate, and hypoxanthine to inosine monophosphate. Transfers the 5-phosphoribosyl group from 5-phosphoribosylpyrophosphate onto the purine. Plays a central role in the generation of purine nucleotides through the purine salvage pathway. In Schizosaccharomyces pombe (strain 972 / ATCC 24843) (Fission yeast), this protein is Hypoxanthine-guanine phosphoribosyltransferase (hpt1).